A 506-amino-acid polypeptide reads, in one-letter code: Maturase K (506 aa).

This sequence belongs to the intron maturase 2 family. MatK subfamily.

The protein localises to the plastid. The protein resides in the chloroplast. Usually encoded in the trnK tRNA gene intron. Probably assists in splicing its own and other chloroplast group II introns. In Rhododendron ferrugineum (Alpenrose), this protein is Maturase K.